The sequence spans 59 residues: UPF0434 protein Ping_0902 (59 aa).

The protein belongs to the UPF0434 family.

This is UPF0434 protein Ping_0902 from Psychromonas ingrahamii (strain DSM 17664 / CCUG 51855 / 37).